The chain runs to 133 residues: MTDGEGEAGDRRARGREAERIAEAFLSRAGFEILDRNHATRRGEVDLVCREGSVVCFVEVRSRTSTAQGGPEETVGRGKARRVVAAATDWALRNGGLEQEMRFDVVAVTFEEAGPRVALYRGAFDGEGKPGLW.

Belongs to the UPF0102 family.

In Anaeromyxobacter sp. (strain Fw109-5), this protein is UPF0102 protein Anae109_1947.